A 179-amino-acid polypeptide reads, in one-letter code: Large ribosomal subunit protein uL6 (179 aa).

It belongs to the universal ribosomal protein uL6 family. Part of the 50S ribosomal subunit.

Its function is as follows. This protein binds to the 23S rRNA, and is important in its secondary structure. It is located near the subunit interface in the base of the L7/L12 stalk, and near the tRNA binding site of the peptidyltransferase center. In Acidobacterium capsulatum (strain ATCC 51196 / DSM 11244 / BCRC 80197 / JCM 7670 / NBRC 15755 / NCIMB 13165 / 161), this protein is Large ribosomal subunit protein uL6.